The primary structure comprises 344 residues: MKILGIETSCDDTAVSVYDSEEGLLSNVVSSQIKMHEEWGGVYPDLAAREHTKNIIPVLDRALKEASVNIKDIDGIAVTVAPGLIVSLVIGISVAKTLSWIYRKPLIPVHHIEAHIFASFITEKIDYPFIALVVSGGHTELYLIKGFEDYRYLGGTLDDAVGEAYDKVARMLGLGYPGGPVIDRLSKEGEDTVKLPRPLINDRGKNRFNFSFSGLKTAVLREIQKGVYRKEDIARSFQEAATDVLLAKTIDAMKEFNIKNVVIAGGVSANSRLREKFKEAEENHGIKAYFPPLYLCTDNGAMVAFTGYKRFKESGTTVDYSFEGKARLRMDKFVEIIRKSSVSS.

His-111 and His-115 together coordinate Fe cation. Substrate is bound by residues 133 to 137, Asp-166, Gly-179, Asp-183, and Asn-270; that span reads VVSGG. Asp-298 serves as a coordination point for Fe cation.

This sequence belongs to the KAE1 / TsaD family. The cofactor is Fe(2+).

The protein resides in the cytoplasm. It catalyses the reaction L-threonylcarbamoyladenylate + adenosine(37) in tRNA = N(6)-L-threonylcarbamoyladenosine(37) in tRNA + AMP + H(+). In terms of biological role, required for the formation of a threonylcarbamoyl group on adenosine at position 37 (t(6)A37) in tRNAs that read codons beginning with adenine. Is involved in the transfer of the threonylcarbamoyl moiety of threonylcarbamoyl-AMP (TC-AMP) to the N6 group of A37, together with TsaE and TsaB. TsaD likely plays a direct catalytic role in this reaction. This Persephonella marina (strain DSM 14350 / EX-H1) protein is tRNA N6-adenosine threonylcarbamoyltransferase.